We begin with the raw amino-acid sequence, 246 residues long: Protein lin-37 homolog (246 aa).

The residue at position 1 (Met-1) is an N-acetylmethionine. Glycyl lysine isopeptide (Lys-Gly) (interchain with G-Cter in SUMO2) cross-links involve residues Lys-5 and Lys-7. The segment covering 36-55 has biased composition (basic and acidic residues); the sequence is DRERLDEEPGKTSLDTHNKD. 2 disordered regions span residues 36–90 and 127–209; these read DRER…GGPQ and PTVR…LIYR. Ser-135 and Ser-138 each carry phosphoserine. A compositionally biased stretch (pro residues) spans 163-172; sequence LPPPTAPGPP. Thr-167 is subject to Phosphothreonine. A phosphoserine mark is found at Ser-182 and Ser-202.

Component of the DREAM complex (also named LINC complex) at least composed of E2F4, E2F5, LIN9, LIN37, LIN52, LIN54, MYBL1, MYBL2, RBL1, RBL2, RBBP4, TFDP1 and TFDP2. The complex exists in quiescent cells where it represses cell cycle-dependent genes. It dissociates in S phase when LIN9, LIN37, LIN52 and LIN54 form a subcomplex that binds to MYBL2.

In Bos taurus (Bovine), this protein is Protein lin-37 homolog (LIN37).